The sequence spans 348 residues: D-erythrose-4-phosphate dehydrogenase (348 aa).

NAD(+) contacts are provided by residues 12–13 (RI) and R81. Residues 154 to 156 (SCT), R200, 213 to 214 (TK), and R236 each bind substrate. Catalysis depends on C155, which acts as the Nucleophile. Residue N318 coordinates NAD(+).

This sequence belongs to the glyceraldehyde-3-phosphate dehydrogenase family. Epd subfamily. In terms of assembly, homotetramer.

The protein resides in the cytoplasm. It catalyses the reaction D-erythrose 4-phosphate + NAD(+) + H2O = 4-phospho-D-erythronate + NADH + 2 H(+). It functions in the pathway cofactor biosynthesis; pyridoxine 5'-phosphate biosynthesis; pyridoxine 5'-phosphate from D-erythrose 4-phosphate: step 1/5. Its function is as follows. Catalyzes the NAD-dependent conversion of D-erythrose 4-phosphate to 4-phosphoerythronate. The protein is D-erythrose-4-phosphate dehydrogenase of Salmonella paratyphi B (strain ATCC BAA-1250 / SPB7).